The primary structure comprises 1513 residues: Exo-beta-1,6-galactobiohydrolase (1513 aa).

Residues 1 to 31 (MRVLSKSLAAMVAAATLVGGGAFAVAGTAYA) form the signal peptide. Residues 666 to 801 (VADTTSGDSA…PSANQTWTLR (136 aa)) enclose the Ricin B-type lectin domain. F5/8 type C domains lie at 965-1112 (AIYV…AFVT) and 1116-1273 (GAAK…VFAQ). The disordered stretch occupies residues 1456–1480 (VAPGPEEQKPGNTNKPGATGNGNKN). Over residues 1465–1480 (PGNTNKPGATGNGNKN) the composition is skewed to polar residues. A helical membrane pass occupies residues 1489 to 1509 (VAAIAGAVALLAAAAGALFML).

The protein belongs to the glycosyl hydrolase 30 family.

The protein resides in the cell membrane. It carries out the reaction Hydrolysis of (1-&gt;6)-beta-D-galactosidic linkages in arabinogalactan proteins and (1-&gt;3):(1-&gt;6)-beta-galactans to yield (1-&gt;6)-beta-galactobiose as the final product.. Involved in the type II arabinogalactan (AG) side chains degradation. Specifically releases the non-reducing terminal beta-1,6-galactobiose (beta-1,6-Gal2) from both dearabinosylated larch AG and polymeric beta-1,6-galactan chains by an exo-mode of action. Shows lower activity with larch AG, and very weak activity with dearabinosylated gum arabic, gum arabic and potato galactan. Can probably release beta-1,6-Gal2 from the internal side chains of type II AG. The chain is Exo-beta-1,6-galactobiohydrolase from Bifidobacterium longum subsp. longum (strain ATCC 15707 / DSM 20219 / JCM 1217 / NCTC 11818 / E194b).